We begin with the raw amino-acid sequence, 247 residues long: 2,3-bisphosphoglycerate-dependent phosphoglycerate mutase (247 aa).

Substrate is bound by residues 8–15, 21–22, arginine 60, 87–90, lysine 98, 114–115, and 183–184; these read RHGESTWN, TG, ERHY, RR, and GN. Residue histidine 9 is the Tele-phosphohistidine intermediate of the active site. Glutamate 87 functions as the Proton donor/acceptor in the catalytic mechanism.

Belongs to the phosphoglycerate mutase family. BPG-dependent PGAM subfamily. Homodimer.

The catalysed reaction is (2R)-2-phosphoglycerate = (2R)-3-phosphoglycerate. It functions in the pathway carbohydrate degradation; glycolysis; pyruvate from D-glyceraldehyde 3-phosphate: step 3/5. In terms of biological role, catalyzes the interconversion of 2-phosphoglycerate and 3-phosphoglycerate. In Paracidovorax citrulli (strain AAC00-1) (Acidovorax citrulli), this protein is 2,3-bisphosphoglycerate-dependent phosphoglycerate mutase.